Here is an 881-residue protein sequence, read N- to C-terminus: Alanine--tRNA ligase (881 aa).

The Zn(2+) site is built by His563, His567, Cys672, and His676.

It belongs to the class-II aminoacyl-tRNA synthetase family. The cofactor is Zn(2+).

The protein resides in the cytoplasm. The enzyme catalyses tRNA(Ala) + L-alanine + ATP = L-alanyl-tRNA(Ala) + AMP + diphosphate. Functionally, catalyzes the attachment of alanine to tRNA(Ala) in a two-step reaction: alanine is first activated by ATP to form Ala-AMP and then transferred to the acceptor end of tRNA(Ala). Also edits incorrectly charged Ser-tRNA(Ala) and Gly-tRNA(Ala) via its editing domain. In Azorhizobium caulinodans (strain ATCC 43989 / DSM 5975 / JCM 20966 / LMG 6465 / NBRC 14845 / NCIMB 13405 / ORS 571), this protein is Alanine--tRNA ligase.